The primary structure comprises 117 residues: Large ribosomal subunit protein bL20 (117 aa).

It belongs to the bacterial ribosomal protein bL20 family.

Functionally, binds directly to 23S ribosomal RNA and is necessary for the in vitro assembly process of the 50S ribosomal subunit. It is not involved in the protein synthesizing functions of that subunit. The protein is Large ribosomal subunit protein bL20 of Limosilactobacillus fermentum (strain NBRC 3956 / LMG 18251) (Lactobacillus fermentum).